The sequence spans 282 residues: UDP-3-O-acyl-N-acetylglucosamine deacetylase (282 aa).

Zn(2+) is bound by residues histidine 80, histidine 240, and aspartate 244. Residue histidine 267 is the Proton donor of the active site.

Belongs to the LpxC family. Requires Zn(2+) as cofactor.

It localises to the plastid. Its subcellular location is the chloroplast. It carries out the reaction a UDP-3-O-[(3R)-3-hydroxyacyl]-N-acetyl-alpha-D-glucosamine + H2O = a UDP-3-O-[(3R)-3-hydroxyacyl]-alpha-D-glucosamine + acetate. It participates in glycolipid biosynthesis; lipid IV(A) biosynthesis; lipid IV(A) from (3R)-3-hydroxytetradecanoyl-[acyl-carrier-protein] and UDP-N-acetyl-alpha-D-glucosamine: step 2/6. Catalyzes the hydrolysis of UDP-3-O-myristoyl-N-acetylglucosamine to form UDP-3-O-myristoylglucosamine and acetate. Involved in the biosynthesis of lipid A, a phosphorylated glycolipid that in bacteria anchors the lipopolysaccharide to the outer membrane of the cell. The target for the lipopolysaccharides produced in the chloroplast could either be the cell envelope of the eukaryote or the plastid membrane. This chain is UDP-3-O-acyl-N-acetylglucosamine deacetylase, found in Cyanidium caldarium (Red alga).